We begin with the raw amino-acid sequence, 234 residues long: Eukaryotic translation initiation factor 3 subunit K (234 aa).

A PCI domain is found at 46 to 219 (SDIEANLALL…EAKPATTTES (174 aa)).

Belongs to the eIF-3 subunit K family. In terms of assembly, component of the eukaryotic translation initiation factor 3 (eIF-3) complex.

Its subcellular location is the cytoplasm. Component of the eukaryotic translation initiation factor 3 (eIF-3) complex, which is involved in protein synthesis of a specialized repertoire of mRNAs and, together with other initiation factors, stimulates binding of mRNA and methionyl-tRNAi to the 40S ribosome. The eIF-3 complex specifically targets and initiates translation of a subset of mRNAs involved in cell proliferation. This is Eukaryotic translation initiation factor 3 subunit K from Yarrowia lipolytica (strain CLIB 122 / E 150) (Yeast).